Reading from the N-terminus, the 41-residue chain is Plantazolicin (41 aa).

A propeptide spanning residues 1–27 (MTKITIPTALSAKVHGEGQHLFEPMAA) is cleaved from the precursor. R28 is modified (N2,N2-dimethylarginine; in form plantazolicin A). The thiazole-4-carboxylic acid (Arg-Cys) cross-link spans 28–29 (RC). 2 consecutive cross-links (5-methyloxazole-4-carboxylic acid (Cys-Thr)) follow at residues 29–30 (CT) and 31–32 (CT). The thiazole-4-carboxylic acid (Thr-Cys) cross-link spans 30–31 (TC). The 5-methyloxazole-4-carboxylic acid (Thr-Thr) cross-link spans 32–33 (TT). Residues 35–36 (IS) constitute a cross-link (oxazole-4-carboxylic acid (Ile-Ser)). Cross-links (oxazole-4-carboxylic acid (Ser-Ser)) lie at residues 36-37 (SS), 37-38 (SS), and 38-39 (SS). The 5-methyloxazoline-4-carboxylic acid (Ser-Thr) cross-link spans 39 to 40 (ST).

Post-translationally, maturation of thiazole and oxazole containing antibiotics involves the enzymatic condensation of a Cys, Ser or Thr with the alpha-carbonyl of the preceding amino acid to form a thioether or ether bond, then dehydration to form a double bond with the alpha-amino nitrogen. Thiazoline or oxazoline ring are dehydrogenated to form thiazole or oxazole rings.

Its subcellular location is the secreted. The protein localises to the cell wall. Its function is as follows. Peptide antibiotic inhibiting growth of Gram-positive bacteria. The mode of action appears to be disruption of cell walls and lysis of cells. In Bacillus pumilus (strain ATCC 7061 / DSM 27 / CCUG 26015 / JCM 2508 / NBRC 12092 / NCIMB 9369 / NCTC 10337 / NRRL NRS-272 / CCM 2144), this protein is Plantazolicin.